Reading from the N-terminus, the 508-residue chain is Transposase (508 aa).

An HTH IS21-type domain is found at 3-65 (LLSVIRRWHF…PFADRLSAWL (63 aa)). The region spanning 124 to 299 (LAFEPGEAFQ…TIADIWVEEV (176 aa)) is the Integrase catalytic domain.

Belongs to the transposase IS21/IS408/IS1162 family.

Functionally, required for the transposition of the insertion element. This chain is Transposase (nmoT), found in Aminobacter aminovorans (Chelatobacter heintzii).